Reading from the N-terminus, the 325-residue chain is Tetraacyldisaccharide 4'-kinase (325 aa).

Position 58 to 65 (58 to 65) interacts with ATP; that stretch reads TVGGSGKT.

This sequence belongs to the LpxK family.

It carries out the reaction a lipid A disaccharide + ATP = a lipid IVA + ADP + H(+). It participates in glycolipid biosynthesis; lipid IV(A) biosynthesis; lipid IV(A) from (3R)-3-hydroxytetradecanoyl-[acyl-carrier-protein] and UDP-N-acetyl-alpha-D-glucosamine: step 6/6. In terms of biological role, transfers the gamma-phosphate of ATP to the 4'-position of a tetraacyldisaccharide 1-phosphate intermediate (termed DS-1-P) to form tetraacyldisaccharide 1,4'-bis-phosphate (lipid IVA). This is Tetraacyldisaccharide 4'-kinase from Coxiella burnetii (strain Dugway 5J108-111).